A 373-amino-acid chain; its full sequence is MLIIIRPSGEIALKSPRSRRNFEHTLANNIRSVIKEGKIWRSQGVLFLEVNDDNKNIEELSKVFGIASFSPVMSIKSYNNNLEDIINKAKEVFAEIVKGKIFSVRAKRIGSHNFTSLDVQRKVGEALYPFSRGVNLENPEVEVFIEIRNDVAYFYHKIIKGPKGLPVGVAGKTVVLFSGGIDSPVATWMMMKRGSIPVILNFNLGGSVHRKFVLEELSVLRKWSGGHKLKLFIVNGTDVLIKLSQIEKRNRVVMLKRVMYKVAERLCDKANAKSITTGESLSQVSSQTMTNLYVTEYGIKYPIFRPLIGFDKEEIVELARKIGTYEYSIKLPEYCAISTKARTSVELDEVLKDEENLNIDYEKVLENSEVIEI.

The THUMP domain occupies 54–158 (NKNIEELSKV…NDVAYFYHKI (105 aa)). ATP contacts are provided by residues 176–177 (LF), 201–202 (NF), Lys256, Gly278, and Gln287.

It belongs to the ThiI family.

Its subcellular location is the cytoplasm. The catalysed reaction is [ThiI sulfur-carrier protein]-S-sulfanyl-L-cysteine + a uridine in tRNA + 2 reduced [2Fe-2S]-[ferredoxin] + ATP + H(+) = [ThiI sulfur-carrier protein]-L-cysteine + a 4-thiouridine in tRNA + 2 oxidized [2Fe-2S]-[ferredoxin] + AMP + diphosphate. It carries out the reaction [ThiS sulfur-carrier protein]-C-terminal Gly-Gly-AMP + S-sulfanyl-L-cysteinyl-[cysteine desulfurase] + AH2 = [ThiS sulfur-carrier protein]-C-terminal-Gly-aminoethanethioate + L-cysteinyl-[cysteine desulfurase] + A + AMP + 2 H(+). The protein operates within cofactor biosynthesis; thiamine diphosphate biosynthesis. Functionally, catalyzes the ATP-dependent transfer of a sulfur to tRNA to produce 4-thiouridine in position 8 of tRNAs, which functions as a near-UV photosensor. Also catalyzes the transfer of sulfur to the sulfur carrier protein ThiS, forming ThiS-thiocarboxylate. This is a step in the synthesis of thiazole, in the thiamine biosynthesis pathway. The sulfur is donated as persulfide by IscS. This chain is Probable tRNA sulfurtransferase, found in Saccharolobus islandicus (strain M.14.25 / Kamchatka #1) (Sulfolobus islandicus).